Reading from the N-terminus, the 99-residue chain is MAFRKFLPLFDRVLVERLMAETVTKGGIMLPEKSQGKVLQATVVAVGPGSMNQKGEVQPMSVKVGEKVLLPQYGGTKVVLEDKDYFLFRDADILGKYVD.

Belongs to the GroES chaperonin family. As to quaternary structure, homoheptamer arranged in a ring structure. 2 heptameric Hsp10 rings interact with a Hsp60 tetradecamer in the structure of a back-to-back double heptameric ring to form the symmetrical football complex.

The protein localises to the mitochondrion matrix. Its function is as follows. Co-chaperonin implicated in mitochondrial protein import and macromolecular assembly. Together with Hsp60, facilitates the correct folding of imported proteins. May also prevent misfolding and promote the refolding and proper assembly of unfolded polypeptides generated under stress conditions in the mitochondrial matrix. The functional units of these chaperonins consist of heptameric rings of the large subunit Hsp60, which function as a back-to-back double ring. In a cyclic reaction, Hsp60 ring complexes bind one unfolded substrate protein per ring, followed by the binding of ATP and association with 2 heptameric rings of the co-chaperonin Hsp10. This leads to sequestration of the substrate protein in the inner cavity of Hsp60 where, for a certain period of time, it can fold undisturbed by other cell components. Synchronous hydrolysis of ATP in all Hsp60 subunits results in the dissociation of the chaperonin rings and the release of ADP and the folded substrate protein. The sequence is that of 10 kDa heat shock protein, mitochondrial (hspe1) from Oryzias latipes (Japanese rice fish).